Here is a 274-residue protein sequence, read N- to C-terminus: Tryptophan synthase alpha chain (274 aa).

Active-site proton acceptor residues include E49 and D60.

It belongs to the TrpA family. Tetramer of two alpha and two beta chains.

The enzyme catalyses (1S,2R)-1-C-(indol-3-yl)glycerol 3-phosphate + L-serine = D-glyceraldehyde 3-phosphate + L-tryptophan + H2O. It functions in the pathway amino-acid biosynthesis; L-tryptophan biosynthesis; L-tryptophan from chorismate: step 5/5. In terms of biological role, the alpha subunit is responsible for the aldol cleavage of indoleglycerol phosphate to indole and glyceraldehyde 3-phosphate. This is Tryptophan synthase alpha chain from Gluconacetobacter diazotrophicus (strain ATCC 49037 / DSM 5601 / CCUG 37298 / CIP 103539 / LMG 7603 / PAl5).